The sequence spans 1251 residues: Botulinum neurotoxin type E (1251 aa).

H212 is a Zn(2+) binding site. The active site involves E213. The Zn(2+) site is built by H216 and E251. Cysteines 412 and 426 form a disulfide. Residues 423 to 819 (KSICIEINNG…ELNSMVIDTL (397 aa)) form a translocation domain (TD) region. The interval 466–515 (NDLDQVILNFNSESAPGLSDEKLNLTIQNDAYIPKYDSNGTSDIEQHDVN) is belt. The N-terminus of receptor binding domain (N-RBD) stretch occupies residues 845 to 1067 (KRIKSSSVLN…EIQTLYNNEP (223 aa)). Residues 1068-1251 (NANILKDFWG…ISEEHGWQEK (184 aa)) form a C-terminus of receptor binding domain (C-RBD) region. Positions 1221–1224 (STWY) match the Host ganglioside-binding motif motif.

It belongs to the peptidase M27 family. As to quaternary structure, heterodimer; disulfide-linked heterodimer of a light chain (LC) and a heavy chain (HC). The LC has the proteolytic/pharmacological activity, while the N- and C-terminal of the HC mediate channel formation and toxin binding, respectively. Interacts with host synaptic vesicle glycoproteins SV2A and SV2B which probably serve as coreceptors. Zn(2+) serves as cofactor.

The protein resides in the secreted. Its subcellular location is the host cytoplasm. It is found in the host cytosol. It localises to the host synapse. The protein localises to the host presynaptic cell membrane. The protein resides in the host cytoplasmic vesicle. Its subcellular location is the host secretory vesicle. It is found in the host synaptic vesicle membrane. It carries out the reaction Limited hydrolysis of proteins of the neuroexocytosis apparatus, synaptobrevins, SNAP25 or syntaxin. No detected action on small molecule substrates.. In terms of biological role, botulinum toxin causes flaccid paralysis by inhibiting neurotransmitter (acetylcholine) release from the presynaptic membranes of nerve terminals of eukaryotic host skeletal and autonomic nervous system, with frequent heart or respiratory failure. Precursor of botulinum neurotoxin E which has 2 coreceptors; complex polysialylated gangliosides found on neural tissue and specific membrane-anchored proteins found in synaptic vesicles. Receptor proteins are exposed on host presynaptic cell membrane during neurotransmitter release, when the toxin heavy chain (HC) binds to them. Upon synaptic vesicle recycling the toxin is taken up via the endocytic pathway. When the pH of the toxin-containing endosome drops a structural rearrangement occurs so that the N-terminus of the HC forms pores that allows the light chain (LC) to translocate into the cytosol. Once in the cytosol the disulfide bond linking the 2 subunits is reduced and LC cleaves its target protein on synaptic vesicles, preventing their fusion with the cytoplasmic membrane and thus neurotransmitter release. Its function is as follows. Has proteolytic activity. After translocation into the eukaryotic host cytosol, LC hydrolyzes the '180-Arg-|-Ile-181' bond in SNAP25, blocking neurotransmitter release. Functionally, responsible for host epithelial cell transcytosis, host nerve cell targeting and translocation of light chain (LC) into host cytosol. Composed of 3 subdomains; the translocation domain (TD), and N-terminus and C-terminus of the receptor-binding domain (RBD). The RBD is responsible for the adherence of the toxin to the cell surface. It simultaneously recognizes 2 coreceptors; host polysialated gangliosides and the receptor proteins SV2A and SV2B in close proximity on host synaptic vesicles. Interaction with SV2 proteins requires SV2 glycosylation. The N-terminus of the TD wraps an extended belt around the perimeter of the LC, protecting Zn(2+) in the active site; it may also prevent premature LC dissociation from the translocation channel and protect toxin prior to translocation. The TD inserts into synaptic vesicle membrane to allow translocation into the host cytosol. Binds ganglioside GD1a in vitro. The chain is Botulinum neurotoxin type E from Clostridium butyricum.